The primary structure comprises 980 residues: Thrombospondin-4 (980 aa).

The signal sequence occupies residues 1 to 42 (MTMITPSSKLTLTKGNKSWSSTRCGAFLLLHLVLQPWQRAGA). Positions 43 to 210 (QATPQVFDLL…LEELKLVVRG (168 aa)) constitute a Laminin G-like domain. Positions 304-343 (PTRRCDSSPCFRGVRCTDTRDGFQCGPCPDGYTGNGITCS) constitute an EGF-like 1 domain. 21 disulfide bridges follow: Cys308–Cys319, Cys313–Cys328, Cys331–Cys342, Cys348–Cys359, Cys353–Cys368, Cys371–Cys395, Cys401–Cys412, Cys406–Cys421, Cys424–Cys436, Cys442–Cys456, Cys450–Cys466, Cys468–Cys480, Cys496–Cys501, Cys506–Cys526, Cys542–Cys562, Cys565–Cys585, Cys601–Cys621, Cys624–Cys644, Cys662–Cys682, Cys702–Cys722, and Cys738–Cys959. Residues 344–381 (DVDECKYHPCYPGVRCTNLAPGFRCDACPVGFTGPMVQ) form the EGF-like 2; calcium-binding domain. The 38-residue stretch at 397–434 (DVDECRNGACVLNSICINTLGSYRCGPCKPGYTGDQTR) folds into the EGF-like 3; calcium-binding domain. The EGF-like 4 domain occupies 438–481 (TERSCRNPEQNPCSVHAQCIEERQGDVTCVCGVGWAGRAGYVCG). 8 TSP type-3 repeats span residues 482–514 (KDVD…NSGQ), 515–550 (EDAD…NVDQ), 551–573 (RNTD…NNDQ), 574–609 (KDTD…NRDQ), 610–632 (QDRD…NPNQ), 633–670 (SDVD…NSAQ), 671–710 (LDTD…NPAQ), and 711–746 (EDSN…EITL). The interval 596–691 (NILDNCPRVP…CDDDDDNDGM (96 aa)) is disordered. Basic and acidic residues predominate over residues 605–615 (PNRDQQDRDGD). Residue Asn631 is glycosylated (N-linked (GlcNAc...) asparagine). The segment covering 659 to 671 (TDNCPTVINSAQL) has biased composition (polar residues). The segment covering 679–690 (GDECDDDDDNDG) has biased composition (acidic residues). In terms of domain architecture, TSP C-terminal spans 750–964 (RAYQTVVLDP…LKYRCNDTIP (215 aa)). Asn960 is a glycosylation site (N-linked (GlcNAc...) asparagine).

It belongs to the thrombospondin family. In terms of assembly, homopentamer; disulfide-linked. Interacts with PTBP3. Interacts (via EGF-like 3; calcium-binding domain) with ATF6 and facilitates its processing, activation and nuclear translocation. Interacts with NOTCH1. In terms of tissue distribution, mainly expressed in astrocytes, and in ressponse to peripheral nerve injury, significantly up-regulated in the dorsal spinal cord (at protein level).

It is found in the endoplasmic reticulum. Its subcellular location is the sarcoplasmic reticulum. It localises to the secreted. The protein resides in the extracellular space. The protein localises to the extracellular matrix. Functionally, adhesive glycoprotein that mediates cell-to-cell and cell-to-matrix interactions and is involved in various processes including cellular proliferation, migration, adhesion and attachment, inflammatory response to CNS injury, regulation of vascular inflammation and adaptive responses of the heart to pressure overload and in myocardial function and remodeling. Binds to structural extracellular matrix (ECM) proteins and modulates the ECM in response to tissue damage, contributing to cardioprotective and adaptive ECM remodeling. Plays a role in ER stress response, via its interaction with the activating transcription factor 6 alpha (ATF6) which produces adaptive ER stress response factors and protects myocardium from pressure overload. May contribute to spinal presynaptic hypersensitivity and neuropathic pain states after peripheral nerve injury. May play a role in regulating protective astrogenesis from the subventricular zone (SVZ) niche after injury in a NOTCH1-dependent manner. This is Thrombospondin-4 (Thbs4) from Rattus norvegicus (Rat).